The chain runs to 256 residues: Ubiquinone/menaquinone biosynthesis C-methyltransferase UbiE (256 aa).

S-adenosyl-L-methionine-binding positions include T79, D100, and 128 to 129; that span reads DA.

The protein belongs to the class I-like SAM-binding methyltransferase superfamily. MenG/UbiE family.

It carries out the reaction a 2-demethylmenaquinol + S-adenosyl-L-methionine = a menaquinol + S-adenosyl-L-homocysteine + H(+). The catalysed reaction is a 2-methoxy-6-(all-trans-polyprenyl)benzene-1,4-diol + S-adenosyl-L-methionine = a 5-methoxy-2-methyl-3-(all-trans-polyprenyl)benzene-1,4-diol + S-adenosyl-L-homocysteine + H(+). The protein operates within quinol/quinone metabolism; menaquinone biosynthesis; menaquinol from 1,4-dihydroxy-2-naphthoate: step 2/2. It participates in cofactor biosynthesis; ubiquinone biosynthesis. Its function is as follows. Methyltransferase required for the conversion of demethylmenaquinol (DMKH2) to menaquinol (MKH2) and the conversion of 2-polyprenyl-6-methoxy-1,4-benzoquinol (DDMQH2) to 2-polyprenyl-3-methyl-6-methoxy-1,4-benzoquinol (DMQH2). This chain is Ubiquinone/menaquinone biosynthesis C-methyltransferase UbiE, found in Pseudomonas syringae pv. tomato (strain ATCC BAA-871 / DC3000).